The primary structure comprises 244 residues: 3-deoxy-manno-octulosonate cytidylyltransferase (244 aa).

It belongs to the KdsB family.

It is found in the cytoplasm. It catalyses the reaction 3-deoxy-alpha-D-manno-oct-2-ulosonate + CTP = CMP-3-deoxy-beta-D-manno-octulosonate + diphosphate. Its pathway is nucleotide-sugar biosynthesis; CMP-3-deoxy-D-manno-octulosonate biosynthesis; CMP-3-deoxy-D-manno-octulosonate from 3-deoxy-D-manno-octulosonate and CTP: step 1/1. It functions in the pathway bacterial outer membrane biogenesis; lipopolysaccharide biosynthesis. Activates KDO (a required 8-carbon sugar) for incorporation into bacterial lipopolysaccharide in Gram-negative bacteria. The protein is 3-deoxy-manno-octulosonate cytidylyltransferase of Wolinella succinogenes (strain ATCC 29543 / DSM 1740 / CCUG 13145 / JCM 31913 / LMG 7466 / NCTC 11488 / FDC 602W) (Vibrio succinogenes).